A 275-amino-acid polypeptide reads, in one-letter code: Probable siderophore transport system ATP-binding protein YusV (275 aa).

Positions 6–242 (ISTETLSLGY…DLVQNVFSMN (237 aa)) constitute an ABC transporter domain. 38–45 (GSNGCGKS) lines the ATP pocket.

It belongs to the ABC transporter superfamily. The iron-hydroxamate siderophore complex is composed of one ATP-binding protein (YusV), two transmembrane proteins (YfiZ and YfhA) and a solute-binding protein (YfiY); the catechoplate siderophore complex is composed of one ATP-binding protein (YusV), two transmembrane proteins (FeuB and FeuC) and a solute-binding protein (FeuA).

The protein localises to the cell membrane. In terms of biological role, provides the ATPase subunit for at least 2 ABC transporter complexes; YfiYZ/YfhA/YusV involved in import of the iron-hydroxamate siderophores schizokinen, arthrobactin and corprogen, and FeuABC/YusV involved in import of the catecholate siderophores bacillibactin and enterobactin. Probably responsible for energy coupling to the transport system. This chain is Probable siderophore transport system ATP-binding protein YusV (yusV), found in Bacillus subtilis (strain 168).